The sequence spans 502 residues: Glycerol kinase (502 aa).

Residue Thr-14 participates in ADP binding. The ATP site is built by Thr-14, Thr-15, and Ser-16. Thr-14 provides a ligand contact to sn-glycerol 3-phosphate. ADP is bound at residue Arg-18. The sn-glycerol 3-phosphate site is built by Arg-84, Glu-85, Tyr-136, and Asp-246. Glycerol-binding residues include Arg-84, Glu-85, Tyr-136, Asp-246, and Gln-247. Residues Thr-268 and Gly-311 each contribute to the ADP site. ATP is bound by residues Thr-268, Gly-311, Gln-315, and Gly-412. 2 residues coordinate ADP: Gly-412 and Asn-416.

Belongs to the FGGY kinase family. As to quaternary structure, homotetramer and homodimer (in equilibrium). Heterodimer with EIIA-Glc. Binds 1 zinc ion per glycerol kinase EIIA-Glc dimer. The zinc ion is important for dimerization.

The enzyme catalyses glycerol + ATP = sn-glycerol 3-phosphate + ADP + H(+). The protein operates within polyol metabolism; glycerol degradation via glycerol kinase pathway; sn-glycerol 3-phosphate from glycerol: step 1/1. With respect to regulation, activity of this regulatory enzyme is affected by several metabolites. Allosterically and non-competitively inhibited by fructose 1,6-bisphosphate (FBP) and unphosphorylated phosphocarrier protein EIIA-Glc (III-Glc), an integral component of the bacterial phosphotransferase (PTS) system. In terms of biological role, key enzyme in the regulation of glycerol uptake and metabolism. Catalyzes the phosphorylation of glycerol to yield sn-glycerol 3-phosphate. This chain is Glycerol kinase, found in Salmonella arizonae (strain ATCC BAA-731 / CDC346-86 / RSK2980).